Reading from the N-terminus, the 222-residue chain is UPF0316 protein Mboo_0791 (222 aa).

A run of 3 helical transmembrane segments spans residues F25–A45, L67–L87, and I93–I113.

It belongs to the UPF0316 family.

It is found in the cell membrane. The protein is UPF0316 protein Mboo_0791 of Methanoregula boonei (strain DSM 21154 / JCM 14090 / 6A8).